The chain runs to 29 residues: Dermaseptin-J5 (29 aa).

Val29 carries the post-translational modification Valine amide.

As to expression, expressed by the skin glands.

Its subcellular location is the secreted. Functionally, has antimicrobial activity. This chain is Dermaseptin-J5, found in Phasmahyla jandaia (Jandaia leaf frog).